Consider the following 275-residue polypeptide: Biotin synthase (275 aa).

The Radical SAM core domain maps to methionine 1–arginine 217. Residues cysteine 13, cysteine 17, and cysteine 20 each coordinate [4Fe-4S] cluster. Positions 57, 92, 150, and 217 each coordinate [2Fe-2S] cluster.

The protein belongs to the radical SAM superfamily. Biotin synthase family. As to quaternary structure, homodimer. It depends on [4Fe-4S] cluster as a cofactor. Requires [2Fe-2S] cluster as cofactor.

It catalyses the reaction (4R,5S)-dethiobiotin + (sulfur carrier)-SH + 2 reduced [2Fe-2S]-[ferredoxin] + 2 S-adenosyl-L-methionine = (sulfur carrier)-H + biotin + 2 5'-deoxyadenosine + 2 L-methionine + 2 oxidized [2Fe-2S]-[ferredoxin]. It functions in the pathway cofactor biosynthesis; biotin biosynthesis; biotin from 7,8-diaminononanoate: step 2/2. Its function is as follows. Catalyzes the conversion of dethiobiotin (DTB) to biotin by the insertion of a sulfur atom into dethiobiotin via a radical-based mechanism. The sequence is that of Biotin synthase from Campylobacter fetus subsp. fetus (strain 82-40).